A 148-amino-acid polypeptide reads, in one-letter code: 3-dehydroquinate dehydratase (148 aa).

The active-site Proton acceptor is Tyr24. Substrate contacts are provided by Asn80, His86, and Asp93. Residue His106 is the Proton donor of the active site. Residues 107 to 108 (IS) and Arg117 contribute to the substrate site.

The protein belongs to the type-II 3-dehydroquinase family. In terms of assembly, homododecamer.

It carries out the reaction 3-dehydroquinate = 3-dehydroshikimate + H2O. It functions in the pathway metabolic intermediate biosynthesis; chorismate biosynthesis; chorismate from D-erythrose 4-phosphate and phosphoenolpyruvate: step 3/7. Catalyzes a trans-dehydration via an enolate intermediate. The polypeptide is 3-dehydroquinate dehydratase (Acidovorax ebreus (strain TPSY) (Diaphorobacter sp. (strain TPSY))).